Consider the following 270-residue polypeptide: 5'-AMP-activated protein kinase subunit beta-1 (270 aa).

A disordered region spans residues 1–43; the sequence is MGNTSSERAALERHGGHKTPRRDSSGGTKDGDRPKILMDSPED. Glycine 2 carries the N-myristoyl glycine lipid modification. A Phosphothreonine modification is found at threonine 4. 2 positions are modified to phosphoserine: serine 5 and serine 6. Threonine 19 is modified (phosphothreonine). The segment covering 21–36 has biased composition (basic and acidic residues); the sequence is RRDSSGGTKDGDRPKI. A phosphoserine; by autocatalysis mark is found at serine 24 and serine 25. A phosphoserine mark is found at serine 40, serine 96, serine 101, and serine 108. The interval 68–163 is glycogen-binding domain; the sequence is EVNDKAPAQA…QVKKTDFEVF (96 aa). At threonine 148 the chain carries Phosphothreonine. Phosphoserine is present on serine 182.

It belongs to the 5'-AMP-activated protein kinase beta subunit family. AMPK is a heterotrimer of an alpha catalytic subunit (PRKAA1 or PRKAA2), a beta (PRKAB1 or PRKAB2) and a gamma non-catalytic subunits (PRKAG1, PRKAG2 or PRKAG3). Interacts with FNIP1 and FNIP2. In terms of processing, phosphorylated when associated with the catalytic subunit (PRKAA1 or PRKAA2). Phosphorylated by ULK1; leading to negatively regulate AMPK activity and suggesting the existence of a regulatory feedback loop between ULK1 and AMPK.

In terms of biological role, non-catalytic subunit of AMP-activated protein kinase (AMPK), an energy sensor protein kinase that plays a key role in regulating cellular energy metabolism. In response to reduction of intracellular ATP levels, AMPK activates energy-producing pathways and inhibits energy-consuming processes: inhibits protein, carbohydrate and lipid biosynthesis, as well as cell growth and proliferation. AMPK acts via direct phosphorylation of metabolic enzymes, and by longer-term effects via phosphorylation of transcription regulators. Also acts as a regulator of cellular polarity by remodeling the actin cytoskeleton; probably by indirectly activating myosin. Beta non-catalytic subunit acts as a scaffold on which the AMPK complex assembles, via its C-terminus that bridges alpha (PRKAA1 or PRKAA2) and gamma subunits (PRKAG1, PRKAG2 or PRKAG3). The protein is 5'-AMP-activated protein kinase subunit beta-1 (PRKAB1) of Homo sapiens (Human).